A 327-amino-acid chain; its full sequence is Phenylalanine--tRNA ligase alpha subunit (327 aa).

Mg(2+) is bound at residue glutamate 252.

Belongs to the class-II aminoacyl-tRNA synthetase family. Phe-tRNA synthetase alpha subunit type 1 subfamily. Tetramer of two alpha and two beta subunits. Mg(2+) is required as a cofactor.

It localises to the cytoplasm. It carries out the reaction tRNA(Phe) + L-phenylalanine + ATP = L-phenylalanyl-tRNA(Phe) + AMP + diphosphate + H(+). The protein is Phenylalanine--tRNA ligase alpha subunit of Hamiltonella defensa subsp. Acyrthosiphon pisum (strain 5AT).